The sequence spans 348 residues: Heat-inducible transcription repressor HrcA (348 aa).

It belongs to the HrcA family.

Functionally, negative regulator of class I heat shock genes (grpE-dnaK-dnaJ and groELS operons). Prevents heat-shock induction of these operons. The protein is Heat-inducible transcription repressor HrcA of Pelotomaculum thermopropionicum (strain DSM 13744 / JCM 10971 / SI).